A 523-amino-acid chain; its full sequence is Glycine betaine transporter 1 (523 aa).

A run of 12 helical transmembrane segments spans residues 33-53 (VFGI…VLDA), 71-91 (FDWL…ALIV), 109-129 (SFMS…LMFW), 165-185 (FHWG…LAFF), 214-234 (IVDI…LGLG), 251-271 (GLGL…VSVV), 286-306 (MVVA…ASLG), 337-357 (WTVF…MFIA), 372-392 (VLIV…GLAI), 420-440 (VLPF…VFFI), 467-487 (VFWA…GGSE), and 496-516 (AIST…SLLM).

Belongs to the BCCT transporter (TC 2.A.15) family.

Its subcellular location is the cell inner membrane. Involved in the uptake of the osmoprotectant glycine betaine. This is Glycine betaine transporter 1 from Vibrio parahaemolyticus serotype O3:K6 (strain RIMD 2210633).